Consider the following 432-residue polypeptide: D-amino acid dehydrogenase (432 aa).

Residue valine 3–tryptophan 17 coordinates FAD.

It belongs to the DadA oxidoreductase family. The cofactor is FAD.

The catalysed reaction is a D-alpha-amino acid + A + H2O = a 2-oxocarboxylate + AH2 + NH4(+). Its pathway is amino-acid degradation; D-alanine degradation; NH(3) and pyruvate from D-alanine: step 1/1. Oxidative deamination of D-amino acids. This chain is D-amino acid dehydrogenase, found in Shigella sonnei (strain Ss046).